The following is a 255-amino-acid chain: MSNSESVPHVDPGAAPYGNFPNYYSFNPPENRISLLPAELLHKLFRKPAESDSSTQPLLGLDVGCNTGDLSVALYNHLTEPHSKSSDVPVHFLCCDIDPDLITRARASNPFPDFISYATLDIMDSSAVRGPVNDFLQQFARSTFDIAFCMSVTMWIHLNYGDQGLVTFLGHLANLCDYLLVEPQPWKCYRSAARRLRKLGRQDFDHFHSLSIRGDMAENITQILTAEGAAKLIHIFGNTSWDRSLLLFKIQRHPC.

Residues Arg32, Asn66, Asp96, 121–122, and Met150 contribute to the S-adenosyl-L-methionine site; that span reads DI. Positions 41 to 253 constitute a Bin3-type SAM domain; it reads LHKLFRKPAE…SLLLFKIQRH (213 aa).

It belongs to the methyltransferase superfamily.

It is found in the cytoplasm. It catalyses the reaction a 5'-end 5'-phospho-ribonucleoside-RNA + S-adenosyl-L-methionine = a 5'-end (5'-methylphospho)-ribonucleoside-RNA + S-adenosyl-L-homocysteine. The enzyme catalyses a 5'-end 5'-phospho-ribonucleoside-RNA + 2 S-adenosyl-L-methionine = a 5'-end (5'-bismethylphospho)-ribonucleoside-RNA + 2 S-adenosyl-L-homocysteine. O-methyltransferase that specifically monomethylates 5'-monophosphate of cytoplasmic histidyl tRNA (tRNA(His)), acting as a capping enzyme by protecting tRNA(His) from cleavage by DICER1. Also able, with less efficiently, to methylate the 5' monophosphate of a subset of pre-miRNAs, acting as a negative regulator of miRNA processing. The 5' monophosphate of pre-miRNAs is recognized by DICER1 and is required for pre-miRNAs processing: methylation at this position reduces the processing of pre-miRNAs by DICER1. Was also reported to mediate dimethylation of pre-miR-145; however dimethylation cannot be reproduced by another group which observes a monomethylation of pre-miR-145. This is Pre-miRNA 5'-monophosphate methyltransferase (bcdin3d) from Xenopus laevis (African clawed frog).